The following is a 227-amino-acid chain: Small ribosomal subunit protein uS3 (227 aa).

Residues 39–107 form the KH type-2 domain; the sequence is VRQLLQKRLK…PVHITIEEVR (69 aa).

The protein belongs to the universal ribosomal protein uS3 family. In terms of assembly, part of the 30S ribosomal subunit. Forms a tight complex with proteins S10 and S14.

Its function is as follows. Binds the lower part of the 30S subunit head. Binds mRNA in the 70S ribosome, positioning it for translation. The protein is Small ribosomal subunit protein uS3 of Coxiella burnetii (strain CbuK_Q154) (Coxiella burnetii (strain Q154)).